The chain runs to 196 residues: Imidazole glycerol phosphate synthase subunit HisH (196 aa).

The Glutamine amidotransferase type-1 domain maps to 2-196 (NVVILDTGCA…AKLLKNFLEM (195 aa)). Cys77 (nucleophile) is an active-site residue. Catalysis depends on residues His178 and Glu180.

As to quaternary structure, heterodimer of HisH and HisF.

Its subcellular location is the cytoplasm. The enzyme catalyses 5-[(5-phospho-1-deoxy-D-ribulos-1-ylimino)methylamino]-1-(5-phospho-beta-D-ribosyl)imidazole-4-carboxamide + L-glutamine = D-erythro-1-(imidazol-4-yl)glycerol 3-phosphate + 5-amino-1-(5-phospho-beta-D-ribosyl)imidazole-4-carboxamide + L-glutamate + H(+). It carries out the reaction L-glutamine + H2O = L-glutamate + NH4(+). Its pathway is amino-acid biosynthesis; L-histidine biosynthesis; L-histidine from 5-phospho-alpha-D-ribose 1-diphosphate: step 5/9. In terms of biological role, IGPS catalyzes the conversion of PRFAR and glutamine to IGP, AICAR and glutamate. The HisH subunit catalyzes the hydrolysis of glutamine to glutamate and ammonia as part of the synthesis of IGP and AICAR. The resulting ammonia molecule is channeled to the active site of HisF. The sequence is that of Imidazole glycerol phosphate synthase subunit HisH from Shigella flexneri.